Reading from the N-terminus, the 549-residue chain is 4-hydroxybutyrate--CoA ligase 2 (549 aa).

ATP-binding positions include 195-203, 336-341, Asp-425, and Arg-440; these read TSGTTGLPK and ETYGPH. CoA contacts are provided by residues 448 to 450, Lys-506, and 514 to 516; these read GGE and CPK. Position 530 (Lys-530) interacts with ATP.

Belongs to the ATP-dependent AMP-binding enzyme family. It depends on Mg(2+) as a cofactor. The cofactor is Mn(2+).

The catalysed reaction is 4-hydroxybutanoate + ATP + CoA = 4-hydroxybutanoyl-CoA + AMP + diphosphate. It catalyses the reaction acetate + ATP + CoA = acetyl-CoA + AMP + diphosphate. The enzyme catalyses propanoate + ATP + CoA = propanoyl-CoA + AMP + diphosphate. It carries out the reaction a medium-chain fatty acid + ATP + CoA = a medium-chain fatty acyl-CoA + AMP + diphosphate. Functionally, catalyzes the ligation of coenzyme A (CoA) to 4-hydroxybutyrate (4HB). It can also use butyrate, valerate, propionate, acetate and 3-hydroxybutyrate (3HB) as substrates. In Metallosphaera sedula (strain ATCC 51363 / DSM 5348 / JCM 9185 / NBRC 15509 / TH2), this protein is 4-hydroxybutyrate--CoA ligase 2.